The chain runs to 424 residues: Serine--tRNA ligase (424 aa).

231-233 (TAE) contacts L-serine. Residue 261-263 (RSE) participates in ATP binding. Residue E284 participates in L-serine binding. 348-351 (ETSS) lines the ATP pocket. S383 is an L-serine binding site.

The protein belongs to the class-II aminoacyl-tRNA synthetase family. Type-1 seryl-tRNA synthetase subfamily. In terms of assembly, homodimer. The tRNA molecule binds across the dimer.

The protein resides in the cytoplasm. The catalysed reaction is tRNA(Ser) + L-serine + ATP = L-seryl-tRNA(Ser) + AMP + diphosphate + H(+). The enzyme catalyses tRNA(Sec) + L-serine + ATP = L-seryl-tRNA(Sec) + AMP + diphosphate + H(+). The protein operates within aminoacyl-tRNA biosynthesis; selenocysteinyl-tRNA(Sec) biosynthesis; L-seryl-tRNA(Sec) from L-serine and tRNA(Sec): step 1/1. Functionally, catalyzes the attachment of serine to tRNA(Ser). Is also able to aminoacylate tRNA(Sec) with serine, to form the misacylated tRNA L-seryl-tRNA(Sec), which will be further converted into selenocysteinyl-tRNA(Sec). This is Serine--tRNA ligase from Metamycoplasma arthritidis (strain 158L3-1) (Mycoplasma arthritidis).